The primary structure comprises 597 residues: Probable translation initiation factor IF-2 (597 aa).

Residues 10 to 226 (LRTPIVAVLG…LMGLSQRFMK (217 aa)) enclose the tr-type G domain. Residues 19–26 (GHVDHGKT) form a G1 region. 19–26 (GHVDHGKT) is a GTP binding site. Residues 44–48 (AITQH) are G2. The G3 stretch occupies residues 81 to 84 (DTPG). GTP-binding positions include 81 to 85 (DTPGH) and 135 to 138 (NKVD). Positions 135–138 (NKVD) are G4. The interval 203-205 (SAI) is G5.

The protein belongs to the TRAFAC class translation factor GTPase superfamily. Classic translation factor GTPase family. IF-2 subfamily.

In terms of biological role, function in general translation initiation by promoting the binding of the formylmethionine-tRNA to ribosomes. Seems to function along with eIF-2. The polypeptide is Probable translation initiation factor IF-2 (Halorubrum lacusprofundi (strain ATCC 49239 / DSM 5036 / JCM 8891 / ACAM 34)).